Consider the following 184-residue polypeptide: MLLNEKDFKNEGVKIAALIMAESARTAPKSKGEDTIEIVYVDGEEMEKIAAKMEEMAEGGDKDFIRDAESVRKSQAILLIGAKGDRTVGVNCQACGFESCSEFKKADRKGENFVGPNCAFRMIDLGIALGSAVKVSAMLGIDTRIMYRIGIAAKKLGMIDADVVMGVPLSALGKSPYFDRAPKK.

In terms of domain architecture, 4Fe-4S spans 72–135; that stretch reads RKSQAILLIG…GIALGSAVKV (64 aa). Positions 92, 95, 100, and 118 each coordinate [4Fe-4S] cluster.

[4Fe-4S] cluster is required as a cofactor.

This is an uncharacterized protein from Archaeoglobus fulgidus (strain ATCC 49558 / DSM 4304 / JCM 9628 / NBRC 100126 / VC-16).